The chain runs to 321 residues: Ribose-phosphate pyrophosphokinase (321 aa).

Residues 44 to 46 (DGE) and 103 to 104 (RQ) contribute to the ATP site. His-137 and Asp-179 together coordinate Mg(2+). The active site involves Lys-202. D-ribose 5-phosphate contacts are provided by residues Arg-204, Asp-228, and 232–236 (DTAGT).

It belongs to the ribose-phosphate pyrophosphokinase family. Class I subfamily. As to quaternary structure, homohexamer. Mg(2+) serves as cofactor.

The protein resides in the cytoplasm. The enzyme catalyses D-ribose 5-phosphate + ATP = 5-phospho-alpha-D-ribose 1-diphosphate + AMP + H(+). The protein operates within metabolic intermediate biosynthesis; 5-phospho-alpha-D-ribose 1-diphosphate biosynthesis; 5-phospho-alpha-D-ribose 1-diphosphate from D-ribose 5-phosphate (route I): step 1/1. Functionally, involved in the biosynthesis of the central metabolite phospho-alpha-D-ribosyl-1-pyrophosphate (PRPP) via the transfer of pyrophosphoryl group from ATP to 1-hydroxyl of ribose-5-phosphate (Rib-5-P). The protein is Ribose-phosphate pyrophosphokinase of Staphylococcus aureus (strain COL).